A 151-amino-acid polypeptide reads, in one-letter code: Ubiquitin-conjugating enzyme E2-17 kDa (151 aa).

In terms of domain architecture, UBC core spans 4-150; sequence PARRRLMRDF…VKACVEQSFI (147 aa). Catalysis depends on Cys88, which acts as the Glycyl thioester intermediate.

It belongs to the ubiquitin-conjugating enzyme family.

The protein localises to the nucleus. It carries out the reaction S-ubiquitinyl-[E1 ubiquitin-activating enzyme]-L-cysteine + [E2 ubiquitin-conjugating enzyme]-L-cysteine = [E1 ubiquitin-activating enzyme]-L-cysteine + S-ubiquitinyl-[E2 ubiquitin-conjugating enzyme]-L-cysteine.. It participates in protein modification; protein ubiquitination. Functionally, E2 ubiquitin-conjugating enzyme that accepts ubiquitin from the ubiquitin-activating enzyme E1 and transfers it to a E3 ubiquitin-protein ligase. Required for postreplication repair of UV-damaged DNA. Involved in the negative regulation of the Ras/MAPK signaling pathway in the wing by acting with the putative E3 ligases poe, Kcmf1 and Ufd4 to mediate the ubiquitination and proteasomal degradation of rl/MAPK. Required for in mitophagy. This chain is Ubiquitin-conjugating enzyme E2-17 kDa, found in Drosophila melanogaster (Fruit fly).